The sequence spans 112 residues: MGKKENQLYEGAYVFSVTLSEEARRKALDKVISGITNYGGEIHKIHDQGRKKLAYTIRGAREGYYYFIYFSVSPGAITELWKEYHLNEDLLRFMTLRADSVKEVLEFASLPE.

The protein belongs to the bacterial ribosomal protein bS6 family.

Functionally, binds together with bS18 to 16S ribosomal RNA. In Chlamydia pneumoniae (Chlamydophila pneumoniae), this protein is Small ribosomal subunit protein bS6 (rpsF).